We begin with the raw amino-acid sequence, 73 residues long: Sec-independent protein translocase protein TatA (73 aa).

A helical membrane pass occupies residues 1 to 21 (MGSFSIGHWLIVLAIIVLLFG). The interval 43–73 (MEDTTPEKSEKVEHKEESATSQKIEETTKNA) is disordered.

Belongs to the TatA/E family. In terms of assembly, the Tat system comprises two distinct complexes: a TatABC complex, containing multiple copies of TatA, TatB and TatC subunits, and a separate TatA complex, containing only TatA subunits. Substrates initially bind to the TatABC complex, which probably triggers association of the separate TatA complex to form the active translocon.

It localises to the cell inner membrane. Its function is as follows. Part of the twin-arginine translocation (Tat) system that transports large folded proteins containing a characteristic twin-arginine motif in their signal peptide across membranes. TatA could form the protein-conducting channel of the Tat system. In Campylobacter concisus (strain 13826), this protein is Sec-independent protein translocase protein TatA.